Reading from the N-terminus, the 482-residue chain is Succinate-semialdehyde dehydrogenase [NADP(+)] GabD (482 aa).

NADP(+) is bound by residues 156-157 (WN), 180-183 (KPAS), and 233-234 (GS). Glu255 serves as the catalytic Proton acceptor. Residue Leu256 participates in NADP(+) binding. Cys289 functions as the Nucleophile in the catalytic mechanism. Glu386 provides a ligand contact to NADP(+).

It belongs to the aldehyde dehydrogenase family. In terms of assembly, homotetramer.

It carries out the reaction succinate semialdehyde + NADP(+) + H2O = succinate + NADPH + 2 H(+). It catalyses the reaction 5-oxopentanoate + NADP(+) + H2O = glutarate + NADPH + 2 H(+). The protein operates within amino-acid degradation; 4-aminobutanoate degradation. It participates in amino-acid degradation. Functionally, catalyzes the NADP(+)-dependent oxidation of succinate semialdehyde to succinate. Thereby functions in a GABA degradation pathway that allows some E.coli strains to utilize GABA as a nitrogen source for growth. Also catalyzes the conversion of glutarate semialdehyde to glutarate, as part of a L-lysine degradation pathway that proceeds via cadaverine, glutarate and L-2-hydroxyglutarate. In Escherichia coli (strain K12), this protein is Succinate-semialdehyde dehydrogenase [NADP(+)] GabD (gabD).